The following is a 296-amino-acid chain: Ribosomal RNA small subunit methyltransferase J (296 aa).

An S-adenosyl-L-methionine-binding site is contributed by Asp205.

This sequence belongs to the methyltransferase superfamily. RsmJ family.

Its subcellular location is the cytoplasm. The enzyme catalyses guanosine(1516) in 16S rRNA + S-adenosyl-L-methionine = N(2)-methylguanosine(1516) in 16S rRNA + S-adenosyl-L-homocysteine + H(+). Its function is as follows. Specifically methylates the guanosine in position 1516 of 16S rRNA. This Psychrobacter arcticus (strain DSM 17307 / VKM B-2377 / 273-4) protein is Ribosomal RNA small subunit methyltransferase J.